Here is a 126-residue protein sequence, read N- to C-terminus: Nitrogenase-stabilizing/protective protein NifW (126 aa).

Positions 104 to 126 are disordered; it reads VPMSEITVERPATTQTDEKGQQR.

The protein belongs to the NifW family. As to quaternary structure, homotrimer; associates with NifD.

May protect the nitrogenase Fe-Mo protein from oxidative damage. The chain is Nitrogenase-stabilizing/protective protein NifW from Parafrankia sp. (strain EAN1pec).